The primary structure comprises 304 residues: Glutaminase (304 aa).

Residues serine 63, asparagine 113, glutamate 157, asparagine 164, tyrosine 188, tyrosine 240, and valine 258 each coordinate substrate.

Belongs to the glutaminase family. In terms of assembly, homotetramer.

The catalysed reaction is L-glutamine + H2O = L-glutamate + NH4(+). This Paraburkholderia phytofirmans (strain DSM 17436 / LMG 22146 / PsJN) (Burkholderia phytofirmans) protein is Glutaminase.